Reading from the N-terminus, the 439-residue chain is Actin-related protein 3 (439 aa).

Residues 40 to 71 form a disordered region; sequence PSAGTGGSGSGRPAVANKPSFLTGGAGPGGHL.

The protein belongs to the actin family. ARP3 subfamily. Component of the Arp2/3 complex composed.

It localises to the cytoplasm. The protein localises to the cytoskeleton. Its function is as follows. Functions as ATP-binding component of the Arp2/3 complex which is involved in regulation of actin polymerization and together with an activating nucleation-promoting factor (NPF) mediates the formation of branched actin networks. Seems to contact the pointed end of the daughter actin filament. The polypeptide is Actin-related protein 3 (arp-3) (Neurospora crassa (strain ATCC 24698 / 74-OR23-1A / CBS 708.71 / DSM 1257 / FGSC 987)).